A 630-amino-acid chain; its full sequence is uncharacterized protein (630 aa).

The next 4 membrane-spanning stretches (helical) occupy residues 254-274, 504-524, 564-584, and 601-621; these read MFYAVINTYLIMLISVEELRV, IALLESLSFSWLDPFYGLTSI, MIFAYIAAFVVGFINFFSMVF, and IIVISIASVLAFILIVIAVLF.

It localises to the cell membrane. This is an uncharacterized protein from Mycoplasma genitalium (strain ATCC 33530 / DSM 19775 / NCTC 10195 / G37) (Mycoplasmoides genitalium).